Reading from the N-terminus, the 253-residue chain is Troponin T, fast skeletal muscle isoforms (253 aa).

The span at 1–25 shows a compositional bias: acidic residues; that stretch reads MSDTEEVEHGEEEYEEEEEVQEEEV. 2 disordered regions span residues 1–58 and 97–178; these read MSDT…DIQK and RAER…VLAE. N-acetylserine is present on S2. 3 stretches are compositionally biased toward basic and acidic residues: residues 46–58, 97–139, and 167–178; these read PEGE…DIQK, RAER…DDLK, and TARETKKKVLAE.

This sequence belongs to the troponin T family.

Functionally, troponin T is the tropomyosin-binding subunit of troponin, the thin filament regulatory complex which confers calcium-sensitivity to striated muscle actomyosin ATPase activity. The chain is Troponin T, fast skeletal muscle isoforms (TNNT3) from Coturnix japonica (Japanese quail).